The primary structure comprises 313 residues: Porphobilinogen deaminase (313 aa).

Cys242 is subject to S-(dipyrrolylmethanemethyl)cysteine.

This sequence belongs to the HMBS family. Monomer. Requires dipyrromethane as cofactor.

It carries out the reaction 4 porphobilinogen + H2O = hydroxymethylbilane + 4 NH4(+). Its pathway is porphyrin-containing compound metabolism; protoporphyrin-IX biosynthesis; coproporphyrinogen-III from 5-aminolevulinate: step 2/4. In terms of biological role, tetrapolymerization of the monopyrrole PBG into the hydroxymethylbilane pre-uroporphyrinogen in several discrete steps. This Pseudomonas fluorescens (strain Pf0-1) protein is Porphobilinogen deaminase.